A 492-amino-acid chain; its full sequence is Lipopolysaccharide biosynthesis protein WzxC (492 aa).

The Cytoplasmic portion of the chain corresponds to 1–12; sequence MSLREKTISGAK. A helical membrane pass occupies residues 13–33; it reads WSAIATVIIIGLGLVQMTVLA. Residues 34 to 42 are Periplasmic-facing; it reads RIIDNHQFG. The chain crosses the membrane as a helical span at residues 43–63; that stretch reads LLTVSLVIIALADTLSDFGIA. The Cytoplasmic segment spans residues 64–81; the sequence is NSIIQRKEISHLELTTLY. Residues 82-102 form a helical membrane-spanning segment; sequence WLNVGLGIVVCVAVFLLSDLI. At 103–104 the chain is on the periplasmic side; the sequence is GD. A helical transmembrane segment spans residues 105 to 125; sequence VLNNPDLAPLIKTLSLAFVVI. Topologically, residues 126 to 157 are cytoplasmic; the sequence is PHGQQFRALMQKELEFNKIGMIETSAVLAGFT. A helical transmembrane segment spans residues 158-178; the sequence is CTVVSAHFWPLAMTAILGYLV. Topologically, residues 179–236 are periplasmic; sequence NSAVRTLLFGYFGRKIYRPGLHFSLASVAPNLRFGAWLTADSIINYLNTNLSTLVLAR. The helical transmembrane segment at 237–257 threads the bilayer; that stretch reads ILGAGVAGGYNLAYNVAVVPP. Residues 258–288 are Cytoplasmic-facing; the sequence is MKLNPIITRVLFPAFAKIQDDTEKLRVNFYK. A helical transmembrane segment spans residues 289-309; that stretch reads LLSVVGIINFPALLGLMVVSN. The Periplasmic portion of the chain corresponds to 310–322; it reads NFVPLVFGEKWNS. The chain crosses the membrane as a helical span at residues 323-343; it reads IIPVLQLLCVVGLLRSVGNPI. At 344-364 the chain is on the cytoplasmic side; that stretch reads GSLLMAKARVDISFKFNVFKT. The chain crosses the membrane as a helical span at residues 365 to 385; it reads FLFIPAIVIGGQMAGAIGVTL. Residue glycine 386 is a topological domain, periplasmic. A helical membrane pass occupies residues 387–407; the sequence is FLLVQIINTILSYFVMIKPVL. Residues 408 to 417 are Cytoplasmic-facing; that stretch reads GSSYRQYILS. Residues 418–438 form a helical membrane-spanning segment; the sequence is LWLPFYLSLPTLVVSYALGIV. At 439–445 the chain is on the periplasmic side; the sequence is LKGQLAL. A helical transmembrane segment spans residues 446 to 466; the sequence is GMLLAVQIATGVLAFVVMIVL. At 467 to 492 the chain is on the cytoplasmic side; that stretch reads SRHPLVVEVKRQFCRSEKMKMLLRAG.

Belongs to the polysaccharide synthase family.

It localises to the cell inner membrane. It participates in bacterial outer membrane biogenesis; lipopolysaccharide biosynthesis. This chain is Lipopolysaccharide biosynthesis protein WzxC (wzxC), found in Escherichia coli (strain K12).